The sequence spans 477 residues: Otolin-1 (477 aa).

Positions 1 to 23 (MWMFSWLCAILIILAIAGMNTIA) are cleaved as a signal peptide. 2 disordered regions span residues 28-55 (HTKF…PEEE) and 111-337 (QKGE…KGEL). Over residues 33-42 (KKSEEREMPK) the composition is skewed to basic and acidic residues. The Collagen-like 1 domain occupies 116–175 (GETGQPGPKGEAGNLGIPGPPGVVGPQGPRGYKGEKGLKGERGDQGVPGYPGKPGAQGEP). Residues Pro133 and Pro136 each carry the hydroxyproline modification. Residues 147–159 (YKGEKGLKGERGD) show a composition bias toward basic and acidic residues. Residues Pro163, Pro166, and Pro169 each carry the hydroxyproline modification. Residue Lys178 is modified to 5-hydroxylysine. Lys178 carries an O-linked (Gal...) hydroxylysine glycan. The span at 182–191 (GNIGLGGVKG) shows a compositional bias: gly residues. A glycan (N-linked (GlcNAc...) asparagine) is linked at Asn202. 2 consecutive Collagen-like domains span residues 209-268 (GDQG…KGSK) and 278-337 (GRNG…KGEL). The residue at position 223 (Pro223) is a Hydroxyproline. Basic and acidic residues-rich tracts occupy residues 226 to 240 (KGEK…EMGD) and 247 to 277 (SGER…EGKS). Pro283 and Pro301 each carry hydroxyproline. A compositionally biased stretch (low complexity) spans 298 to 310 (LGPPGLLGPTGPK). Residue Lys310 is modified to 5-hydroxylysine. Lys310 carries O-linked (Gal...) hydroxylysine glycosylation. A C1q domain is found at 338 to 473 (ARVPRSAFSA…GFLLYPEETS (136 aa)). The N-linked (GlcNAc...) asparagine glycan is linked to Asn381.

Belongs to the OTOL1 family. In terms of assembly, homooligomer; disulfide-linked; probably forms homotrimers. Interacts with OC90. Interacts with CBLN1.

Its subcellular location is the secreted. The protein resides in the extracellular space. It localises to the extracellular matrix. Collagen-like protein specifically expressed in the inner ear, which provides an organic scaffold for otoconia, a calcium carbonate structure in the saccule and utricle of the ear. Acts as a scaffold for biomineralization: sequesters calcium and forms interconnecting fibrils between otoconia that are incorporated into the calcium crystal structure. Together with OC90, modulates calcite crystal morphology and growth kinetics. In Homo sapiens (Human), this protein is Otolin-1.